The chain runs to 422 residues: Tryptophan synthase beta chain 2 (422 aa).

N6-(pyridoxal phosphate)lysine is present on K111.

The protein belongs to the TrpB family. As to quaternary structure, tetramer of two alpha and two beta chains. The cofactor is pyridoxal 5'-phosphate.

It carries out the reaction (1S,2R)-1-C-(indol-3-yl)glycerol 3-phosphate + L-serine = D-glyceraldehyde 3-phosphate + L-tryptophan + H2O. Its pathway is amino-acid biosynthesis; L-tryptophan biosynthesis; L-tryptophan from chorismate: step 5/5. The beta subunit is responsible for the synthesis of L-tryptophan from indole and L-serine. This is Tryptophan synthase beta chain 2 (trpB2) from Thermotoga maritima (strain ATCC 43589 / DSM 3109 / JCM 10099 / NBRC 100826 / MSB8).